Consider the following 214-residue polypeptide: Adenylate kinase (214 aa).

Glycine 10 to threonine 15 is a binding site for ATP. Residues cysteine 30–valine 59 form an NMP region. AMP-binding positions include threonine 31, arginine 36, lysine 57–valine 59, glycine 85–arginine 88, and glutamine 92. Residues glycine 122 to aspartate 159 form an LID region. ATP-binding positions include arginine 123 and valine 132–tyrosine 133. Arginine 156 and arginine 167 together coordinate AMP. Arginine 200 is an ATP binding site.

Belongs to the adenylate kinase family. Monomer.

The protein localises to the cytoplasm. The enzyme catalyses AMP + ATP = 2 ADP. The protein operates within purine metabolism; AMP biosynthesis via salvage pathway; AMP from ADP: step 1/1. Functionally, catalyzes the reversible transfer of the terminal phosphate group between ATP and AMP. Plays an important role in cellular energy homeostasis and in adenine nucleotide metabolism. The polypeptide is Adenylate kinase (Yersinia enterocolitica).